Consider the following 98-residue polypeptide: Peptide YY (98 aa).

Residues 1 to 28 (MVAVRRPWPVMVAMLLVLLACLGALVDA) form the signal peptide. The residue at position 41 (Ser-41) is a Phosphoserine. Tyrosine amide is present on Tyr-64. The propeptide occupies 68 to 98 (EVPAALFSKLLFTDDSENLPFRSRPEGVDQW).

This sequence belongs to the NPY family. In terms of processing, the peptide YY form is cleaved at Pro-30 by the prolyl endopeptidase FAP (seprase) activity (in vitro) to generate peptide YY(3-36).

Its subcellular location is the secreted. This gut peptide inhibits exocrine pancreatic secretion, has a vasoconstrictory action and inhibitis jejunal and colonic mobility. The chain is Peptide YY (Pyy) from Rattus norvegicus (Rat).